Reading from the N-terminus, the 360-residue chain is WAT1-related protein At3g28070 (360 aa).

10 consecutive transmembrane segments (helical) span residues alanine 15 to phenylalanine 35, isoleucine 45 to phenylalanine 65, isoleucine 84 to tyrosine 104, threonine 108 to phenylalanine 128, serine 140 to tyrosine 160, tryptophan 190 to leucine 210, valine 224 to glutamate 244, proline 248 to valine 268, leucine 286 to phenylalanine 306, and leucine 311 to tryptophan 331. Residues glycine 30 to isoleucine 158 enclose the EamA domain.

Belongs to the drug/metabolite transporter (DMT) superfamily. Plant drug/metabolite exporter (P-DME) (TC 2.A.7.4) family.

Its subcellular location is the membrane. This chain is WAT1-related protein At3g28070, found in Arabidopsis thaliana (Mouse-ear cress).